Consider the following 131-residue polypeptide: MSIQYTTVGDLKVGNYVVIDGEPCRVVEISKAKTGKHGSAKANIVAIGLFTGQKRTLMAPVDQQVEVPIIEKHIGQILADKGDTITIMDMENYETFDIEKPTDADIVDKIRPGAEVEYWEIMGRKKIVRVK.

Position 36 is a hypusine (K36).

This sequence belongs to the eIF-5A family.

The protein localises to the cytoplasm. Its function is as follows. Functions by promoting the formation of the first peptide bond. In Sulfurisphaera tokodaii (strain DSM 16993 / JCM 10545 / NBRC 100140 / 7) (Sulfolobus tokodaii), this protein is Translation initiation factor 5A.